The chain runs to 520 residues: Transactivator/viroplasmin protein (520 aa).

The tract at residues 487–520 (QNASADSGPKDGPPPTRSIVEKEDVPTTSSKQVD) is disordered.

It belongs to the caulimoviridae viroplasmin family.

It localises to the host cytoplasm. In terms of biological role, enhances the ribosomal termination-reinitiation event leading to the translation of major open reading frames on the polycistronic viral RNAs. This is Transactivator/viroplasmin protein from Arabidopsis thaliana (Mouse-ear cress).